Here is a 385-residue protein sequence, read N- to C-terminus: Polyketide synthase 2 (385 aa).

The active site involves cysteine 157.

This sequence belongs to the thiolase-like superfamily. Chalcone/stilbene synthases family. In terms of tissue distribution, expressed in leaves and glandular trichomes.

The protein localises to the cytoplasm. Its function is as follows. Polyketide synthase responsible for the biosynthesis of secondary metabolites. The polypeptide is Polyketide synthase 2 (PKSG2) (Cannabis sativa (Hemp)).